The chain runs to 247 residues: Centromere protein H (247 aa).

Met1 is modified (N-acetylmethionine). Acidic residues predominate over residues 1–14; it reads MEEQPQMQDADEPA. The segment at 1 to 34 is disordered; the sequence is MEEQPQMQDADEPADSGGEGRAGGPPQVAGAQAA. Ser16 bears the Phosphoserine mark. Residues 24–34 show a composition bias toward low complexity; it reads GPPQVAGAQAA. Residues 47–192 adopt a coiled-coil conformation; it reads RAQTKQQLLE…KIDLDSMENS (146 aa). Residue Lys67 forms a Glycyl lysine isopeptide (Lys-Gly) (interchain with G-Cter in SUMO2) linkage. Thr68 bears the Phosphothreonine mark.

It belongs to the CENP-H/MCM16 family. In terms of assembly, self-associates. Component of the CENPA-NAC complex, at least composed of CENPA, CENPC, CENPH, CENPM, CENPN, CENPT and CENPU. The CENPA-NAC complex interacts with the CENPA-CAD complex, composed of CENPI, CENPK, CENPL, CENPO, CENPP, CENPQ, CENPR and CENPS. Interacts directly with CENPK. Interacts with KIF2C and NDC80. Interacts with TRIM36.

It is found in the nucleus. It localises to the chromosome. The protein resides in the centromere. Its subcellular location is the kinetochore. Component of the CENPA-NAC (nucleosome-associated) complex, a complex that plays a central role in assembly of kinetochore proteins, mitotic progression and chromosome segregation. The CENPA-NAC complex recruits the CENPA-CAD (nucleosome distal) complex and may be involved in incorporation of newly synthesized CENPA into centromeres. Required for chromosome congression and efficiently align the chromosomes on a metaphase plate. The sequence is that of Centromere protein H from Homo sapiens (Human).